We begin with the raw amino-acid sequence, 1071 residues long: DNA-directed RNA polymerase subunit beta (1071 aa).

It belongs to the RNA polymerase beta chain family. In terms of assembly, in plastids the minimal PEP RNA polymerase catalytic core is composed of four subunits: alpha, beta, beta', and beta''. When a (nuclear-encoded) sigma factor is associated with the core the holoenzyme is formed, which can initiate transcription.

It is found in the plastid. It localises to the chloroplast. It catalyses the reaction RNA(n) + a ribonucleoside 5'-triphosphate = RNA(n+1) + diphosphate. Its function is as follows. DNA-dependent RNA polymerase catalyzes the transcription of DNA into RNA using the four ribonucleoside triphosphates as substrates. The chain is DNA-directed RNA polymerase subunit beta from Nymphaea alba (White water-lily).